We begin with the raw amino-acid sequence, 747 residues long: Superkiller protein 7 (747 aa).

Residues 14–51 (KSKGLLSADQSHSTSKSASLLERLHKNRETKDNNAETK) are disordered. Residues 21–31 (ADQSHSTSKSA) are compositionally biased toward polar residues. Residues 35–51 (ERLHKNRETKDNNAETK) are compositionally biased toward basic and acidic residues. Ser-88 and Ser-90 each carry phosphoserine. The segment at 89–117 (NSDLEKQGKSVTLDSKENELPTKRKSPDD) is disordered. Positions 265–503 (PLNLTCLFLG…YVPEWYEGPT (239 aa)) constitute a tr-type G domain. Residues 274-281 (GDTNAGKS) are G1. 274 to 281 (GDTNAGKS) is a GTP binding site. The tract at residues 331–335 (GFSMF) is G2. A G3 region spans residues 356-359 (DTPG). GTP is bound by residues 356-360 (DTPGS) and 427-430 (NKAD). Residues 427 to 430 (NKAD) form a G4 region. A G5 region spans residues 467–469 (SGL).

Belongs to the TRAFAC class translation factor GTPase superfamily. Classic translation factor GTPase family. In terms of assembly, interacts with the exosome and with the SKI complex composed of at least SKI2, SKI3 and SKI8. Interacts directly with SKI3 and SKI8.

It is found in the cytoplasm. In terms of biological role, represses the expression of non-poly(A) mRNAs like L-A or M viruses and is therefore involved in antiviral system. Mediates interactions via its N-terminus between the exosome and the SKI complex which operate in the 3'-to-5' mRNA-decay pathway. By interacting with NAM7, is also required for nonsense-mediated 3'-to-5' mRNA-decay (NMD). May recognize a stalled 80S ribosome at the 3'-end of a nonstop mRNA which leads to the recruitment of the exosome and SKI complexes to the mRNAs to be degraded. This is Superkiller protein 7 (SKI7) from Saccharomyces cerevisiae (strain ATCC 204508 / S288c) (Baker's yeast).